The chain runs to 226 residues: Ribonuclease 3 (226 aa).

One can recognise an RNase III domain in the interval 2–129 (IETISKTIKY…LIGAIYLDGG (128 aa)). Mg(2+) is bound at residue glutamate 42. Aspartate 46 is an active-site residue. The Mg(2+) site is built by asparagine 115 and glutamate 118. Glutamate 118 is a catalytic residue. The 70-residue stretch at 154-223 (DAKTILQEFI…ASLMLNQIKD (70 aa)) folds into the DRBM domain.

This sequence belongs to the ribonuclease III family. Homodimer. It depends on Mg(2+) as a cofactor.

It is found in the cytoplasm. The catalysed reaction is Endonucleolytic cleavage to 5'-phosphomonoester.. Digests double-stranded RNA. Involved in the processing of primary rRNA transcript to yield the immediate precursors to the large and small rRNAs (23S and 16S). Processes some mRNAs, and tRNAs when they are encoded in the rRNA operon. Processes pre-crRNA and tracrRNA of type II CRISPR loci if present in the organism. The protein is Ribonuclease 3 of Ehrlichia canis (strain Jake).